The chain runs to 341 residues: Methionine import ATP-binding protein MetN 2 (341 aa).

The ABC transporter domain occupies 2–241 (IEASELTKVY…PKAPLTQEFI (240 aa)). 38 to 45 (GYSGAGKS) serves as a coordination point for ATP.

Belongs to the ABC transporter superfamily. Methionine importer (TC 3.A.1.24) family. As to quaternary structure, the complex is composed of two ATP-binding proteins (MetN), two transmembrane proteins (MetI) and a solute-binding protein (MetQ).

It localises to the cell membrane. It catalyses the reaction L-methionine(out) + ATP + H2O = L-methionine(in) + ADP + phosphate + H(+). It carries out the reaction D-methionine(out) + ATP + H2O = D-methionine(in) + ADP + phosphate + H(+). In terms of biological role, part of the ABC transporter complex MetNIQ involved in methionine import. Responsible for energy coupling to the transport system. The protein is Methionine import ATP-binding protein MetN 2 of Shouchella clausii (strain KSM-K16) (Alkalihalobacillus clausii).